Here is a 333-residue protein sequence, read N- to C-terminus: Galactinol synthase 1 (333 aa).

K104 is an active-site residue. Residues D120, D122, and H257 each coordinate Mn(2+).

It belongs to the glycosyltransferase 8 family. Galactosyltransferase subfamily. The cofactor is a divalent metal cation. As to expression, expressed in source leaves, specifically in the mesophyll.

The protein resides in the cytoplasm. The catalysed reaction is myo-inositol + UDP-alpha-D-galactose = alpha-D-galactosyl-(1-&gt;3)-1D-myo-inositol + UDP + H(+). In terms of biological role, major galactinol synthase mainly involved in the biosynthesis of storage raffinose family oligosaccharides (RFOs) that function as osmoprotectants. May promote plant stress tolerance. In Ajuga reptans (Bugle), this protein is Galactinol synthase 1 (GOLS1).